Reading from the N-terminus, the 120-residue chain is Large ribosomal subunit protein uL18 (120 aa).

Belongs to the universal ribosomal protein uL18 family. In terms of assembly, part of the 50S ribosomal subunit; part of the 5S rRNA/L5/L18/L25 subcomplex. Contacts the 5S and 23S rRNAs.

Its function is as follows. This is one of the proteins that bind and probably mediate the attachment of the 5S RNA into the large ribosomal subunit, where it forms part of the central protuberance. The chain is Large ribosomal subunit protein uL18 from Methylobacterium radiotolerans (strain ATCC 27329 / DSM 1819 / JCM 2831 / NBRC 15690 / NCIMB 10815 / 0-1).